The primary structure comprises 518 residues: Cytochrome P450 CYP72A219 (518 aa).

Residues Glu-2–Trp-22 traverse the membrane as a helical segment. A heme-binding site is contributed by Cys-465.

The protein belongs to the cytochrome P450 family. Heme is required as a cofactor.

Its subcellular location is the membrane. Its function is as follows. Probable heme-thiolate monooxygenase. This is Cytochrome P450 CYP72A219 from Panax ginseng (Korean ginseng).